The chain runs to 182 residues: Dynactin subunit 5 (182 aa).

Residue Met1 is modified to N-acetylmethionine.

The protein belongs to the dynactin subunits 5/6 family. Dynactin subunit 5 subfamily. Subunit of dynactin, a multiprotein complex part of a tripartite complex with dynein and a adapter, such as BICDL1, BICD2 or HOOK3. The dynactin complex is built around ACTR1A/ACTB filament and consists of an actin-related filament composed of a shoulder domain, a pointed end and a barbed end. Its length is defined by its flexible shoulder domain. The soulder is composed of 2 DCTN1 subunits, 4 DCTN2 and 2 DCTN3. The 4 DCNT2 (via N-terminus) bind the ACTR1A filament and act as molecular rulers to determine the length. The pointed end is important for binding dynein-dynactin cargo adapters. Consists of 4 subunits: ACTR10, DCNT4, DCTN5 and DCTN6. Within the complex DCTN6 forms a heterodimer with DCTN5. The barbed end is composed of a CAPZA1:CAPZB heterodimers, which binds ACTR1A/ACTB filament and dynactin and stabilizes dynactin. Interacts with N4BP2L1.

It localises to the cytoplasm. Its subcellular location is the cytoskeleton. It is found in the chromosome. The protein resides in the centromere. The protein localises to the kinetochore. Its function is as follows. Part of the dynactin complex that activates the molecular motor dynein for ultra-processive transport along microtubules. This Pongo abelii (Sumatran orangutan) protein is Dynactin subunit 5 (DCTN5).